A 414-amino-acid polypeptide reads, in one-letter code: N-carbamoyl-L-amino-acid amidohydrolase (414 aa).

A divalent metal cation-binding residues include His-83, Asp-94, Glu-129, and His-195. Residues Gln-198, His-231, Asn-281, Arg-294, and Gly-363 each contribute to the an N-carbamoyl-L-alpha-amino acid site. Residues 214 to 333 are involved in dimerization; it reads GIAGPSWFKV…QIEKNMAAVP (120 aa). His-388 provides a ligand contact to a divalent metal cation.

This sequence belongs to the peptidase M20 family. As to quaternary structure, homodimer. Mn(2+) is required as a cofactor. Ni(2+) serves as cofactor. The cofactor is Co(2+). It depends on Fe(2+) as a cofactor.

The catalysed reaction is an N-carbamoyl-L-alpha-amino acid + H2O + 2 H(+) = an L-alpha-amino acid + NH4(+) + CO2. It carries out the reaction N-carbamoyl-L-methionine + H2O + 2 H(+) = L-methionine + NH4(+) + CO2. Functionally, catalyzes the hydrolysis of N-carbamoyl-L-alpha-amino acids to free L-alpha-amino acids. Is strictly L-specific since it is inactive toward N-carbamoyl-D-alpha-amino acids. The protein is N-carbamoyl-L-amino-acid amidohydrolase of Pseudomonas sp. (strain NS671).